A 946-amino-acid polypeptide reads, in one-letter code: Calcium-transporting ATPase type 2C member 2 (946 aa).

The Cytoplasmic segment spans residues 1–106 (MVEGRVSEFL…DNSEPVWKKY (106 aa)). The segment at 71 to 95 (VDLHTGLSEFSVTQRRLAHGWNEFV) is interaction with ORAI1. A helical transmembrane segment spans residues 107-127 (LDQFKNPLILLLLGSALVSVL). At 128–129 (TK) the chain is on the extracellular side. A helical transmembrane segment spans residues 130–150 (EYEDAVSIATAVLVVVTVAFI). The Cytoplasmic segment spans residues 151–231 (QEYRSEKSLE…EAEPCSKTDS (81 aa)). A helical membrane pass occupies residues 232-252 (PLTGGGDLTTLSNIVFMGTLV). Residues 253-293 (QYGRGQGVVIGTGESSQFGEVFKMMQAEETPKTPLQKSMDR) lie on the Extracellular side of the membrane. A Phosphothreonine modification is found at threonine 264. Phosphoserine is present on residues serine 267 and serine 268. A helical membrane pass occupies residues 294 to 314 (LGKQLTLFSFGIIGLIMLIGW). The Cytoplasmic segment spans residues 315–331 (SQGKQLLSMFTIGVSLA). Positions 332, 333, 335, and 337 each coordinate Ca(2+). A helical membrane pass occupies residues 332-352 (VAAIPEGLPIVVMVTLVLGVL). Topologically, residues 353 to 750 (RMAKKRVIVK…ISALSLITLS (398 aa)) are extracellular. Residue aspartate 379 is the 4-aspartylphosphate intermediate of the active site. The Mg(2+) site is built by aspartate 674 and aspartate 678. Residues 751–771 (TVFNLPSPLNAMQILWINIIM) form a helical membrane-spanning segment. Ca(2+) is bound by residues asparagine 768 and aspartate 772. The Cytoplasmic portion of the chain corresponds to 772 to 804 (DGPPAQSLGVEPVDKDAFRQPPRSVRDTILSRA). The chain crosses the membrane as a helical span at residues 805-825 (LILKILMSAAIIISGTLFIFW). Topologically, residues 826 to 837 (KEMPEDRASTPR) are extracellular. A helical transmembrane segment spans residues 838-855 (TTTMTFTCFVFFDLFNAL). The Cytoplasmic segment spans residues 856-874 (TCRSQTKLIFEIGFLRNHM). A helical membrane pass occupies residues 875–895 (FLYSVLGSILGQLAVIYIPPL). Over 896–905 (QRVFQTENLG) the chain is Extracellular. Residues 906-926 (ALDLLFLTGLASSVFILSELL) traverse the membrane as a helical segment. At 927 to 946 (KLCEKYCCSPKRVQMHPEDV) the chain is on the cytoplasmic side.

This sequence belongs to the cation transport ATPase (P-type) (TC 3.A.3) family. Type IIA subfamily. In terms of assembly, interacts (via N-terminus) with ORAI1 (via N- and C-termini); this interaction regulates Ca(2+) influx at the plasma membrane. Highly expressed in the gastrointestinal and respiratory tracts, prostate, thyroid, salivary, and mammary glands. Expressed in colon epithelial cells (at protein level). Expressed in brain and testis (at protein level).

It is found in the golgi apparatus. It localises to the trans-Golgi network membrane. The protein resides in the cell membrane. Its subcellular location is the basolateral cell membrane. It catalyses the reaction Ca(2+)(in) + ATP + H2O = Ca(2+)(out) + ADP + phosphate + H(+). It carries out the reaction Mn(2+)(in) + ATP + H2O = Mn(2+)(out) + ADP + phosphate + H(+). ATP-driven pump that supplies the Golgi apparatus with Ca(2+) and Mn(2+) ions, both essential cofactors for processing and trafficking of newly synthesized proteins in the secretory pathway. Within a catalytic cycle, acquires Ca(2+) or Mn(2+) ions on the cytoplasmic side of the membrane and delivers them to the lumenal side. The transfer of ions across the membrane is coupled to ATP hydrolysis and is associated with a transient phosphorylation that shifts the pump conformation from inward-facing to outward-facing state. Induces Ca(2+) influx independently of its ATP-driven pump function. At the basolateral membrane of mammary epithelial cells, interacts with Ca(2+) channel ORAI1 and mediates Ca(2+) entry independently of the Ca(2+) content of endoplasmic reticulum or Golgi stores. May facilitate transepithelial transport of large quantities of Ca(2+) for milk secretion via activation of Ca(2+) influx channels at the plasma membrane and active Ca(2+) transport at the Golgi apparatus. The chain is Calcium-transporting ATPase type 2C member 2 from Homo sapiens (Human).